We begin with the raw amino-acid sequence, 308 residues long: Homoserine O-succinyltransferase (308 aa).

The active-site Acyl-thioester intermediate is Cys-142. Substrate contacts are provided by Lys-163 and Ser-192. His-235 serves as the catalytic Proton acceptor. Residue Glu-237 is part of the active site. Arg-249 is a substrate binding site.

It belongs to the MetA family.

The protein localises to the cytoplasm. It carries out the reaction L-homoserine + succinyl-CoA = O-succinyl-L-homoserine + CoA. It functions in the pathway amino-acid biosynthesis; L-methionine biosynthesis via de novo pathway; O-succinyl-L-homoserine from L-homoserine: step 1/1. Transfers a succinyl group from succinyl-CoA to L-homoserine, forming succinyl-L-homoserine. The sequence is that of Homoserine O-succinyltransferase from Pseudoalteromonas atlantica (strain T6c / ATCC BAA-1087).